Reading from the N-terminus, the 603-residue chain is Flavin-dependent halogenase chlA (603 aa).

Residues Gly16, Ala19, and Glu59 each coordinate FAD. Chloride is bound by residues Thr352 and Gly353.

The protein belongs to the flavin-dependent halogenase family.

The enzyme catalyses 2,4,6-trihydroxyphenylhexan-1-one + FADH2 + chloride + O2 = (3-chloro-2,4,6-trihydroxyphenyl)hexan-1-one + FAD + 2 H2O + H(+). The catalysed reaction is (3-chloro-2,4,6-trihydroxyphenyl)hexan-1-one + FADH2 + chloride + O2 = (3,5-dichloro-2,4,6-trihydroxyphenyl)hexan-1-one + FAD + 2 H2O. Flavin-dependent halogenase; part of the gene cluster that mediates the biosynthesis of DIF-1 (Differentiation Inducing Factor-1), a signal molecule involved in the differentiation of pstO (prestalk-O) cells. The three-step process begins with the formation of (2,4,6-trihydroxyphenyl)-1-hexan-1-one (THPH) by the polyketide synthase StlB. THPH is then dichlorinated by the flavin-dependent halogenase ChlA. The last step of DIF-1 biosynthesis is the O-methylation of dichloro-THPH (or des-methyl-DIF-1) by the methyltransferase DmtA to yield DIF-1. The protein is Flavin-dependent halogenase chlA of Dictyostelium discoideum (Social amoeba).